Consider the following 755-residue polypeptide: 1,4-alpha-glucan branching enzyme GlgB (755 aa).

Catalysis depends on Asp-431, which acts as the Nucleophile. Catalysis depends on Glu-484, which acts as the Proton donor.

The protein belongs to the glycosyl hydrolase 13 family. GlgB subfamily. Monomer.

The catalysed reaction is Transfers a segment of a (1-&gt;4)-alpha-D-glucan chain to a primary hydroxy group in a similar glucan chain.. It functions in the pathway glycan biosynthesis; glycogen biosynthesis. In terms of biological role, catalyzes the formation of the alpha-1,6-glucosidic linkages in glycogen by scission of a 1,4-alpha-linked oligosaccharide from growing alpha-1,4-glucan chains and the subsequent attachment of the oligosaccharide to the alpha-1,6 position. This chain is 1,4-alpha-glucan branching enzyme GlgB, found in Prochlorococcus marinus (strain NATL1A).